The following is a 347-amino-acid chain: Zinc-type alcohol dehydrogenase-like protein C16A3.02c (347 aa).

It belongs to the zinc-containing alcohol dehydrogenase family. Quinone oxidoreductase subfamily.

It localises to the golgi apparatus. The protein resides in the endoplasmic reticulum. The chain is Zinc-type alcohol dehydrogenase-like protein C16A3.02c from Schizosaccharomyces pombe (strain 972 / ATCC 24843) (Fission yeast).